A 265-amino-acid polypeptide reads, in one-letter code: Small ribosomal subunit protein uS3 (265 aa).

One can recognise a KH type-2 domain in the interval 39–111 (IREFLNENFS…EVILNIIEVR (73 aa)). Residues 224–250 (FEAGNQRRGQKRRPRNDQPVKDLNKEK) are disordered. Over residues 238–250 (RNDQPVKDLNKEK) the composition is skewed to basic and acidic residues.

The protein belongs to the universal ribosomal protein uS3 family. As to quaternary structure, part of the 30S ribosomal subunit. Forms a tight complex with proteins S10 and S14.

Binds the lower part of the 30S subunit head. Binds mRNA in the 70S ribosome, positioning it for translation. This chain is Small ribosomal subunit protein uS3, found in Acholeplasma laidlawii.